Here is a 174-residue protein sequence, read N- to C-terminus: Crossover junction endodeoxyribonuclease RuvC (174 aa).

Active-site residues include D8, E67, and D139. Mg(2+) contacts are provided by D8, E67, and D139.

This sequence belongs to the RuvC family. Homodimer which binds Holliday junction (HJ) DNA. The HJ becomes 2-fold symmetrical on binding to RuvC with unstacked arms; it has a different conformation from HJ DNA in complex with RuvA. In the full resolvosome a probable DNA-RuvA(4)-RuvB(12)-RuvC(2) complex forms which resolves the HJ. The cofactor is Mg(2+).

Its subcellular location is the cytoplasm. It catalyses the reaction Endonucleolytic cleavage at a junction such as a reciprocal single-stranded crossover between two homologous DNA duplexes (Holliday junction).. In terms of biological role, the RuvA-RuvB-RuvC complex processes Holliday junction (HJ) DNA during genetic recombination and DNA repair. Endonuclease that resolves HJ intermediates. Cleaves cruciform DNA by making single-stranded nicks across the HJ at symmetrical positions within the homologous arms, yielding a 5'-phosphate and a 3'-hydroxyl group; requires a central core of homology in the junction. The consensus cleavage sequence is 5'-(A/T)TT(C/G)-3'. Cleavage occurs on the 3'-side of the TT dinucleotide at the point of strand exchange. HJ branch migration catalyzed by RuvA-RuvB allows RuvC to scan DNA until it finds its consensus sequence, where it cleaves and resolves the cruciform DNA. The chain is Crossover junction endodeoxyribonuclease RuvC from Pseudomonas fluorescens (strain SBW25).